The primary structure comprises 505 residues: L-carnitine/gamma-butyrobetaine antiporter (505 aa).

12 helical membrane-spanning segments follow: residues 10 to 30, 51 to 71, 92 to 112, 143 to 163, 195 to 215, 231 to 251, 263 to 283, 316 to 336, 347 to 367, 403 to 423, 446 to 466, and 475 to 495; these read IEPK…WLTV, WGWA…WLVF, IFMM…SIEI, GPLP…FFFV, FYLV…TPLV, LDAI…ACGL, SYLS…SFIM, WTVF…IFLA, LCFG…TVLG, LSTA…VTLI, LLVR…LLAL, and AIIA…LSFI.

The protein belongs to the BCCT transporter (TC 2.A.15) family. CaiT subfamily. As to quaternary structure, homotrimer.

Its subcellular location is the cell inner membrane. The catalysed reaction is 4-(trimethylamino)butanoate(in) + (R)-carnitine(out) = 4-(trimethylamino)butanoate(out) + (R)-carnitine(in). Its pathway is amine and polyamine metabolism; carnitine metabolism. Catalyzes the exchange of L-carnitine for gamma-butyrobetaine. This is L-carnitine/gamma-butyrobetaine antiporter from Salmonella agona (strain SL483).